The sequence spans 358 residues: Reverse gyrase subunit A (358 aa).

One can recognise a Topo IA-type catalytic domain in the interval methionine 1–valine 351. The active-site O-(5'-phospho-DNA)-tyrosine intermediate is tyrosine 78.

It belongs to the type IA topoisomerase family. In terms of assembly, heterodimer of an RgyrA and RgyrB subunit. The topoisomerase domain is shared between the two subunits. Mg(2+) is required as a cofactor.

Its subcellular location is the cytoplasm. Functionally, modifies the topological state of DNA by introducing positive supercoils in an ATP-dependent process; dATP also allows positive supercoiling. Increases the linking number in steps of +1. Only this subunit binds DNA, in isolation it does not hydrolyze ATP. Hydrolyzes ATP only in the presence of DNA. Transiently cleaves a single DNA strand and remains covalently bound to the 5' DNA end probably through a tyrosine residue. It changes linking number in steps of one, and nicks DNA preferentially at 5'-CNNN | 3'-sites with a strong preference for 4 pyrimidine residues. There are about 1000 heterodimers per cell. May be involved in rewinding the DNA strands in the regions of the chromosome that have opened up to allow transcription or replication. Its function is as follows. Reverse gyrase activity is reconstituted after incubation at 80 degrees Celsius for 5 minutes, positive supercoiling requires ATP and Mg(2+). In the presence of ATP it binds and nicks substrate but does not make closed product. The chain is Reverse gyrase subunit A from Methanopyrus kandleri (strain AV19 / DSM 6324 / JCM 9639 / NBRC 100938).